A 320-amino-acid polypeptide reads, in one-letter code: MVGKSVVTLDGLSTNQILDLLHKAEYIDSHRKEIAHTCDGRVLATLFYEPSTRTRLSFETAMLRLGGKVIGFAGAQLASVTKGESIADTLKTVSNYVDVVAIRHPKEGAALVASRAASVPVINAGDGGHMHPTQTLADLATLQSRFGRITDLTVGLCGDLTFGRTVHSLIETLCRFGNVRFVLISPDELKTPQYVIDRINATDSCSYVEVRDLASVIGDLDVLYMTRVQKERFFNEDDYLRLRDTYILDEEKLQLAKPSMAVLHPLPRVNEIAVDVDDDPRAAYFEQVKNGMLVRMALESTVVGDELPGYEPLNPKEVQA.

The carbamoyl phosphate site is built by arginine 53 and threonine 54. Lysine 82 contacts L-aspartate. 3 residues coordinate carbamoyl phosphate: arginine 103, histidine 131, and glutamine 134. The L-aspartate site is built by arginine 164 and arginine 227. 2 residues coordinate carbamoyl phosphate: leucine 266 and proline 267.

Belongs to the aspartate/ornithine carbamoyltransferase superfamily. ATCase family. In terms of assembly, heterododecamer (2C3:3R2) of six catalytic PyrB chains organized as two trimers (C3), and six regulatory PyrI chains organized as three dimers (R2).

It catalyses the reaction carbamoyl phosphate + L-aspartate = N-carbamoyl-L-aspartate + phosphate + H(+). It participates in pyrimidine metabolism; UMP biosynthesis via de novo pathway; (S)-dihydroorotate from bicarbonate: step 2/3. Catalyzes the condensation of carbamoyl phosphate and aspartate to form carbamoyl aspartate and inorganic phosphate, the committed step in the de novo pyrimidine nucleotide biosynthesis pathway. In Bifidobacterium longum (strain NCC 2705), this protein is Aspartate carbamoyltransferase catalytic subunit.